Reading from the N-terminus, the 175-residue chain is Ribosome maturation factor RimM (175 aa).

In terms of domain architecture, PRC barrel spans 94 to 166; it reads SDSWYEHELI…FIRLVPPGGL (73 aa).

This sequence belongs to the RimM family. Binds ribosomal protein uS19.

It is found in the cytoplasm. An accessory protein needed during the final step in the assembly of 30S ribosomal subunit, possibly for assembly of the head region. Essential for efficient processing of 16S rRNA. May be needed both before and after RbfA during the maturation of 16S rRNA. It has affinity for free ribosomal 30S subunits but not for 70S ribosomes. The polypeptide is Ribosome maturation factor RimM (Renibacterium salmoninarum (strain ATCC 33209 / DSM 20767 / JCM 11484 / NBRC 15589 / NCIMB 2235)).